The following is a 395-amino-acid chain: HCLS1-binding protein 3 (395 aa).

An N-acetylmethionine modification is found at M1. Phosphoserine is present on S3. A PX domain is found at 19 to 142 (GLDLSVPQHQ…EFLGTRAPGA (124 aa)). Disordered stretches follow at residues 143 to 310 (TGLA…KELF) and 322 to 374 (LGSE…AMDE). A compositionally biased stretch (acidic residues) spans 162–174 (DSDEAFDFFEQQD). The residue at position 191 (S191) is a Phosphoserine. Positions 194 to 206 (GEEEEEEEEEEVL) are enriched in acidic residues. Basic and acidic residues-rich tracts occupy residues 249-260 (SDKKVSETRRPL) and 299-310 (RPEHGDASKELF). Position 254 is a phosphoserine (S254). Positions 329–339 (KPQTKPKPLVP) are enriched in pro residues. K341 carries the N6-acetyllysine modification.

Binds HCLS1. Interacts with the SH3 domain of HCLS1 in vitro. As to expression, ubiquitously expressed.

Its function is as follows. May be a modulator of IL-2 signaling. This is HCLS1-binding protein 3 (Hs1bp3) from Mus musculus (Mouse).